A 516-amino-acid chain; its full sequence is Exodeoxyribonuclease 7 large subunit (516 aa).

It belongs to the XseA family. In terms of assembly, heterooligomer composed of large and small subunits.

It is found in the cytoplasm. The enzyme catalyses Exonucleolytic cleavage in either 5'- to 3'- or 3'- to 5'-direction to yield nucleoside 5'-phosphates.. Its function is as follows. Bidirectionally degrades single-stranded DNA into large acid-insoluble oligonucleotides, which are then degraded further into small acid-soluble oligonucleotides. The chain is Exodeoxyribonuclease 7 large subunit from Chlamydia trachomatis serovar L2 (strain ATCC VR-902B / DSM 19102 / 434/Bu).